We begin with the raw amino-acid sequence, 201 residues long: Large ribosomal subunit protein uL4 (201 aa).

The segment at A45–V73 is disordered.

This sequence belongs to the universal ribosomal protein uL4 family. Part of the 50S ribosomal subunit.

One of the primary rRNA binding proteins, this protein initially binds near the 5'-end of the 23S rRNA. It is important during the early stages of 50S assembly. It makes multiple contacts with different domains of the 23S rRNA in the assembled 50S subunit and ribosome. In terms of biological role, forms part of the polypeptide exit tunnel. This chain is Large ribosomal subunit protein uL4, found in Yersinia pseudotuberculosis serotype O:1b (strain IP 31758).